Here is a 555-residue protein sequence, read N- to C-terminus: Protein NRT1/ PTR FAMILY 2.1 (555 aa).

12 helical membrane-spanning segments follow: residues threonine 32–isoleucine 52, isoleucine 68–phenylalanine 88, isoleucine 91–isoleucine 111, isoleucine 127–valine 147, phenylalanine 175–valine 195, leucine 205–lysine 225, valine 324–methionine 344, valine 369–isoleucine 389, leucine 401–valine 421, valine 437–alanine 457, serine 476–isoleucine 496, and tryptophan 517–phenylalanine 537.

This sequence belongs to the major facilitator superfamily. Proton-dependent oligopeptide transporter (POT/PTR) (TC 2.A.17) family. Expressed in roots.

Its subcellular location is the membrane. Its function is as follows. Transporter involved in a passive nitrate efflux. The protein is Protein NRT1/ PTR FAMILY 2.1 (NPF2.1) of Arabidopsis thaliana (Mouse-ear cress).